The primary structure comprises 470 residues: Cyclin-B1-3 (470 aa).

The protein belongs to the cyclin family. Cyclin AB subfamily.

In Oryza sativa subsp. japonica (Rice), this protein is Cyclin-B1-3 (CYCB1-3).